A 146-amino-acid polypeptide reads, in one-letter code: Anti-sigma F factor (146 aa).

It belongs to the anti-sigma-factor family.

The enzyme catalyses L-seryl-[protein] + ATP = O-phospho-L-seryl-[protein] + ADP + H(+). The catalysed reaction is L-threonyl-[protein] + ATP = O-phospho-L-threonyl-[protein] + ADP + H(+). In terms of biological role, binds to sigma F and blocks its ability to form an RNA polymerase holoenzyme (E-sigma F). Phosphorylates SpoIIAA on a serine residue. This phosphorylation may enable SpoIIAA to act as an anti-anti-sigma factor that counteracts SpoIIAB and thus releases sigma F from inhibition. The polypeptide is Anti-sigma F factor (Bacillus cereus (strain ATCC 14579 / DSM 31 / CCUG 7414 / JCM 2152 / NBRC 15305 / NCIMB 9373 / NCTC 2599 / NRRL B-3711)).